The chain runs to 124 residues: Fluoride-specific ion channel FluC (124 aa).

The next 3 helical transmembrane spans lie at 20-40 (LLSIFMIQVFGSSFPFGTLLV), 60-80 (ISPEIKALIGIGLLGALTTFS), and 102-122 (VLLNVTLCLFMVYLGQQLIFS). The Na(+) site is built by glycine 74 and threonine 77.

This sequence belongs to the fluoride channel Fluc/FEX (TC 1.A.43) family.

It is found in the cell inner membrane. It carries out the reaction fluoride(in) = fluoride(out). With respect to regulation, na(+) is not transported, but it plays an essential structural role and its presence is essential for fluoride channel function. Fluoride-specific ion channel. Important for reducing fluoride concentration in the cell, thus reducing its toxicity. The polypeptide is Fluoride-specific ion channel FluC (Shewanella frigidimarina (strain NCIMB 400)).